A 510-amino-acid chain; its full sequence is NAD(P)H-quinone oxidoreductase subunit 2 B, chloroplastic (510 aa).

The next 13 helical transmembrane spans lie at 24-44, 57-77, 99-119, 124-144, 149-169, 183-203, 227-247, 295-315, 323-343, 354-374, 395-415, 428-448, and 484-504; these read LLLF…GLIL, IPWF…ALLF, IFQF…VEYI, MAIT…MFLC, LITI…LSGY, YLLM…WLYG, PGIL…LSLA, WHLL…LIAI, MLAY…IVGD, YMLF…LFGL, ALSL…AGFF, GLYF…YYYL, and MIVC…IIAI.

It belongs to the complex I subunit 2 family. In terms of assembly, NDH is composed of at least 16 different subunits, 5 of which are encoded in the nucleus.

Its subcellular location is the plastid. It is found in the chloroplast thylakoid membrane. The catalysed reaction is a plastoquinone + NADH + (n+1) H(+)(in) = a plastoquinol + NAD(+) + n H(+)(out). It catalyses the reaction a plastoquinone + NADPH + (n+1) H(+)(in) = a plastoquinol + NADP(+) + n H(+)(out). Functionally, NDH shuttles electrons from NAD(P)H:plastoquinone, via FMN and iron-sulfur (Fe-S) centers, to quinones in the photosynthetic chain and possibly in a chloroplast respiratory chain. The immediate electron acceptor for the enzyme in this species is believed to be plastoquinone. Couples the redox reaction to proton translocation, and thus conserves the redox energy in a proton gradient. The polypeptide is NAD(P)H-quinone oxidoreductase subunit 2 B, chloroplastic (Eucalyptus globulus subsp. globulus (Tasmanian blue gum)).